Reading from the N-terminus, the 461-residue chain is MEKDKKTWSGRFSEPVALLVQRYTASVGFDYRLAEYDIQGSFAHARMLAATNIIPQTDLEAIEKGLTQIWEEIKNGQFEWQLEQEDVHLNIERRLTALTGDAGKRLHTARSRNDQVATDIRLYLRAAIDEIIDLIYGLQYVLLDLAEQHAATIMPGFTHLQVAQPVSFGHHLLAYYEMLLRDGQRLQDCRKRVNQLPLGAAALAGTSYPIDREQVARELGFDDICHNSLDAVSDRDFAIEFCASAALIMMHLSRLSEELILWMSPAFGFIRIADRFCTGSSIMPQKKNPDVPELVRGKTGRINGHLVALLTLMKSQPLAYNKDNQEDKEPLFDTVDTLKDTLTIYADMLAGLQVNPQAMRQAALRGYATATDLADYLVKKGTPFRDAHETVAQAVRFAENKRCDLGELSLADLQQFSAIIEQDVFEVLTLEGSLQSRNHPGGTAPEQVRAAICRARSQLPD.

It belongs to the lyase 1 family. Argininosuccinate lyase subfamily.

Its subcellular location is the cytoplasm. It carries out the reaction 2-(N(omega)-L-arginino)succinate = fumarate + L-arginine. It functions in the pathway amino-acid biosynthesis; L-arginine biosynthesis; L-arginine from L-ornithine and carbamoyl phosphate: step 3/3. The protein is Argininosuccinate lyase of Nitrosomonas eutropha (strain DSM 101675 / C91 / Nm57).